The sequence spans 383 residues: S-adenosylmethionine synthase (383 aa).

His22 is an ATP binding site. Asp24 lines the Mg(2+) pocket. Residue Glu50 coordinates K(+). Residues Glu63 and Gln99 each contribute to the L-methionine site. The tract at residues 99–109 is flexible loop; it reads QSLEINQAVLK. ATP contacts are provided by residues 160–162, Asp235, 241–242, Ser258, and Lys262; these read DMK and RK. Asp235 contacts L-methionine. Lys266 provides a ligand contact to L-methionine.

It belongs to the AdoMet synthase family. As to quaternary structure, homotetramer; dimer of dimers. Mg(2+) is required as a cofactor. K(+) serves as cofactor.

The protein resides in the cytoplasm. The enzyme catalyses L-methionine + ATP + H2O = S-adenosyl-L-methionine + phosphate + diphosphate. It functions in the pathway amino-acid biosynthesis; S-adenosyl-L-methionine biosynthesis; S-adenosyl-L-methionine from L-methionine: step 1/1. In terms of biological role, catalyzes the formation of S-adenosylmethionine (AdoMet) from methionine and ATP. The overall synthetic reaction is composed of two sequential steps, AdoMet formation and the subsequent tripolyphosphate hydrolysis which occurs prior to release of AdoMet from the enzyme. The sequence is that of S-adenosylmethionine synthase from Mycoplasma genitalium (strain ATCC 33530 / DSM 19775 / NCTC 10195 / G37) (Mycoplasmoides genitalium).